A 487-amino-acid polypeptide reads, in one-letter code: Citrate/succinate antiporter (487 aa).

14 helical membrane-spanning segments follow: residues L11–P31, F60–L80, G95–L115, T138–S158, I190–V210, A214–L234, F237–V257, W288–I308, N309–W329, L345–A365, A379–S399, H401–M421, L424–G444, and L463–L483.

This sequence belongs to the SLC13A/DASS transporter (TC 2.A.47) family. DIT1 subfamily.

The protein localises to the cell inner membrane. Responsible for the uptake of citrate in exchange to the efflux of succinate. Has a relatively broad specificity for C(4)-dicarboxylates and tricarboxylates. The sequence is that of Citrate/succinate antiporter (citT) from Escherichia coli O157:H7.